The following is a 316-amino-acid chain: Ribosomal RNA large subunit methyltransferase F (316 aa).

It belongs to the methyltransferase superfamily. METTL16/RlmF family.

It localises to the cytoplasm. The enzyme catalyses adenosine(1618) in 23S rRNA + S-adenosyl-L-methionine = N(6)-methyladenosine(1618) in 23S rRNA + S-adenosyl-L-homocysteine + H(+). Specifically methylates the adenine in position 1618 of 23S rRNA. This is Ribosomal RNA large subunit methyltransferase F from Pseudomonas putida (strain W619).